A 385-amino-acid chain; its full sequence is Meiotic recombination protein SPO11-2 (385 aa).

Residues 24–169 (LPPAEVRARI…LGIMASSRGA (146 aa)) enclose the Topo IIA-type catalytic domain. Catalysis depends on Tyr126, which acts as the O-(5'-phospho-DNA)-tyrosine intermediate. Mg(2+)-binding residues include Glu219 and Asp272.

This sequence belongs to the TOP6A family. Interacts with TOP6B. Mg(2+) is required as a cofactor. As to expression, highly expressed in flowers before pollination. Expressed in roots and shoots.

It localises to the nucleus. It carries out the reaction ATP-dependent breakage, passage and rejoining of double-stranded DNA.. Required for meiotic recombination. Mediates DNA cleavage that forms the double-strand breaks (DSB) that initiate meiotic recombination. The protein is Meiotic recombination protein SPO11-2 (SPO11-2) of Oryza sativa subsp. indica (Rice).